A 319-amino-acid polypeptide reads, in one-letter code: Lipoyl synthase (319 aa).

The interval 1–29 is disordered; the sequence is MVVVVDTVSDKPIRPRHPEKAARPDALSP. Residues 8–29 are compositionally biased toward basic and acidic residues; the sequence is VSDKPIRPRHPEKAARPDALSP. [4Fe-4S] cluster is bound by residues Cys-61, Cys-66, Cys-72, Cys-87, Cys-91, Cys-94, and Ser-300. In terms of domain architecture, Radical SAM core spans 73 to 289; sequence WDRKHATFMI…ESLAYAKGFL (217 aa).

The protein belongs to the radical SAM superfamily. Lipoyl synthase family. It depends on [4Fe-4S] cluster as a cofactor.

It localises to the cytoplasm. The enzyme catalyses [[Fe-S] cluster scaffold protein carrying a second [4Fe-4S](2+) cluster] + N(6)-octanoyl-L-lysyl-[protein] + 2 oxidized [2Fe-2S]-[ferredoxin] + 2 S-adenosyl-L-methionine + 4 H(+) = [[Fe-S] cluster scaffold protein] + N(6)-[(R)-dihydrolipoyl]-L-lysyl-[protein] + 4 Fe(3+) + 2 hydrogen sulfide + 2 5'-deoxyadenosine + 2 L-methionine + 2 reduced [2Fe-2S]-[ferredoxin]. Its pathway is protein modification; protein lipoylation via endogenous pathway; protein N(6)-(lipoyl)lysine from octanoyl-[acyl-carrier-protein]: step 2/2. In terms of biological role, catalyzes the radical-mediated insertion of two sulfur atoms into the C-6 and C-8 positions of the octanoyl moiety bound to the lipoyl domains of lipoate-dependent enzymes, thereby converting the octanoylated domains into lipoylated derivatives. The polypeptide is Lipoyl synthase (Rhodopseudomonas palustris (strain BisA53)).